The sequence spans 98 residues: Lipolysis-activating peptide 1-alpha chain (98 aa).

Residues 1-22 form the signal peptide; that stretch reads MMKFVLFGMIVILFSLMGSIRG. The 64-residue stretch at 26-89 folds into the LCN-type CS-alpha/beta domain; the sequence is PGNYPTNAYG…IWNAVKNHCT (64 aa). 3 cysteine pairs are disulfide-bonded: Cys-40–Cys-63, Cys-49–Cys-68, and Cys-53–Cys-70. Asparagine amide is present on Asn-96.

This sequence belongs to the long (3 C-C) scorpion toxin superfamily. In terms of assembly, monomer (edited version) and heterodimer (non-edited version) of this alpha chain and a beta chain (AC Q95P90). As to expression, expressed by the venom gland.

Its subcellular location is the secreted. The heterodimer non-edited LVP1 induces lipolysis in rat adipocytes. Induction of lipolysis by LVP1 appears to be mediated through the beta-2 adrenergic receptor pathway (ADRB2). Its function is as follows. The edited BmKBTx, similar to beta-toxins, may modulate voltage-gated sodium channels (Nav) and may block voltage-gated potassium channels (Kv). Seems to be a rare component in the venom. This Olivierus martensii (Manchurian scorpion) protein is Lipolysis-activating peptide 1-alpha chain (LVP1a).